Here is a 511-residue protein sequence, read N- to C-terminus: Tryptophan 5-halogenase PyrH (511 aa).

The FAD site is built by G10, A13, S36, V39, I42, V44, and A47. S50 contacts L-tryptophan. K75 is an active-site residue. Residues P93, Q160, and Q163 each contribute to the L-tryptophan site. Residues V195 and L345 each contribute to the FAD site. The chloride site is built by T356 and G357. I358 is a binding site for FAD. L-tryptophan-binding residues include G450 and Y454.

It belongs to the flavin-dependent halogenase family. Bacterial tryptophan halogenase subfamily. Homodimer.

The catalysed reaction is L-tryptophan + FADH2 + chloride + O2 = 5-chloro-L-tryptophan + FAD + 2 H2O. It participates in antibiotic biosynthesis. Involved in the biosynthesis of the antibiotic compound pyrroindomycin B. Catalyzes the chlorination of tryptophan (Trp) at C5 position to yield 5-chloro-L-tryptophan. It is also able to use bromide ions to generate monobrominated Trp, but the brominating activity is only about 75% of the chlorinating activity. The protein is Tryptophan 5-halogenase PyrH of Streptomyces rugosporus.